The sequence spans 293 residues: Nucleotide-binding protein BBR47_52620 (293 aa).

Glycine 17–threonine 24 is a binding site for ATP. Residue aspartate 68–glycine 71 participates in GTP binding.

Belongs to the RapZ-like family.

In terms of biological role, displays ATPase and GTPase activities. This chain is Nucleotide-binding protein BBR47_52620, found in Brevibacillus brevis (strain 47 / JCM 6285 / NBRC 100599).